The following is a 413-amino-acid chain: Aspartate aminotransferase, cytoplasmic (413 aa).

The L-aspartate site is built by glycine 39 and tryptophan 141. Phosphoserine is present on serine 149. An L-aspartate-binding site is contributed by asparagine 195. At lysine 259 the chain carries N6-(pyridoxal phosphate)lysine. Arginine 387 contributes to the L-aspartate binding site.

Belongs to the class-I pyridoxal-phosphate-dependent aminotransferase family. As to quaternary structure, homodimer. Pyridoxal 5'-phosphate serves as cofactor.

It localises to the cytoplasm. The enzyme catalyses L-aspartate + 2-oxoglutarate = oxaloacetate + L-glutamate. The catalysed reaction is L-cysteine + 2-oxoglutarate = 2-oxo-3-sulfanylpropanoate + L-glutamate. It catalyses the reaction (2S)-2-aminobutanoate + 2-oxoglutarate = 2-oxobutanoate + L-glutamate. It carries out the reaction 3-sulfino-L-alanine + 2-oxoglutarate = 3-sulfinopyruvate + L-glutamate. Its function is as follows. Biosynthesis of L-glutamate from L-aspartate or L-cysteine. Important regulator of levels of glutamate, the major excitatory neurotransmitter of the vertebrate central nervous system. Acts as a scavenger of glutamate in brain neuroprotection. The aspartate aminotransferase activity is involved in hepatic glucose synthesis during development and in adipocyte glyceroneogenesis. Using L-cysteine as substrate, regulates levels of mercaptopyruvate, an important source of hydrogen sulfide. Mercaptopyruvate is converted into H(2)S via the action of 3-mercaptopyruvate sulfurtransferase (3MST). Hydrogen sulfide is an important synaptic modulator and neuroprotectant in the brain. The polypeptide is Aspartate aminotransferase, cytoplasmic (Pongo abelii (Sumatran orangutan)).